The sequence spans 216 residues: Protein ADP-ribose pyrophosphatase ORF38 (216 aa).

A Nudix hydrolase domain is found at 1 to 177; it reads MRNAAGLFMI…DYSNYIEFFD (177 aa). The Nudix box motif lies at 48-70; it reads GHRDCCDAKVYETAVREFVEETG.

It localises to the host cytoplasm. The protein resides in the host nucleus. It catalyses the reaction ADP-D-ribose + H2O = D-ribose 5-phosphate + AMP + 2 H(+). Functionally, plays an important role in virus replication most probably through its hydrolyzing ADP-ribose activity in host cells. May function in viral DNA replication or transcription directly, or by removing toxic substances or metabolic intermediates. The chain is Protein ADP-ribose pyrophosphatase ORF38 from Lepidoptera (butterflies and moths).